The following is a 1395-amino-acid chain: uncharacterized protein (1395 aa).

89–96 (AYKKWGKS) is a binding site for ATP. Disordered regions lie at residues 146–166 (EEKI…LSPP) and 205–391 (SSSS…MENR). Composition is skewed to low complexity over residues 155–166 (GSPSPEAELSPP) and 205–222 (SSSS…TSSP). The span at 230 to 269 (EVTKERSSEVPTTVHEKTQSKSKNEKENKFSNGTIEEKPA) shows a compositional bias: basic and acidic residues. A compositionally biased stretch (low complexity) spans 287–301 (SWSSGSSEAGSSSSG). Over residues 313-328 (VKVRHKAREIRNKKGR) the composition is skewed to basic residues. Positions 337 to 346 (KHGEKAERNI) are enriched in basic and acidic residues. Residues 349-358 (GSSSSSSSGS) are compositionally biased toward low complexity. The span at 369–391 (PLKEIGRKDPGSTEGKDLYMENR) shows a compositional bias: basic and acidic residues. Residues Ser-814 and Ser-1080 each carry the phosphoserine modification. Residues 1110–1132 (PISASELSPGGGSESEFESEKDE) form a disordered region. Residues Ser-1194 and Ser-1338 each carry the phosphoserine modification. The span at 1346–1359 (TGERDSGAKSDGFR) shows a compositional bias: basic and acidic residues. A disordered region spans residues 1346-1395 (TGERDSGAKSDGFRGKMCSSASSTSEETGSEGGGEWVGPSEEELFSRTHL).

This is an uncharacterized protein from Homo sapiens (Human).